The sequence spans 502 residues: Cysteine--tRNA ligase (502 aa).

Cysteine 30 lines the Zn(2+) pocket. Positions 32–42 (PTIYDYAHIGN) match the 'HIGH' region motif. Zn(2+) is bound by residues cysteine 224, histidine 263, and glutamate 267. The short motif at 296 to 300 (KMSKS) is the 'KMSKS' region element. Lysine 299 contacts ATP.

It belongs to the class-I aminoacyl-tRNA synthetase family. In terms of assembly, monomer. It depends on Zn(2+) as a cofactor.

Its subcellular location is the cytoplasm. It carries out the reaction tRNA(Cys) + L-cysteine + ATP = L-cysteinyl-tRNA(Cys) + AMP + diphosphate. This Bartonella quintana (strain Toulouse) (Rochalimaea quintana) protein is Cysteine--tRNA ligase.